The primary structure comprises 71 residues: Small integral membrane protein 31 (71 aa).

The helical transmembrane segment at 8 to 28 (LEVAFILLAFFIFSLFTLASI) threads the bilayer. Residues 48–57 (RKRKEFKGKK) are compositionally biased toward basic residues. Residues 48 to 71 (RKRKEFKGKKNCSDEEHKIETMQP) form a disordered region. Asn-58 carries N-linked (GlcNAc...) asparagine glycosylation. The span at 58-71 (NCSDEEHKIETMQP) shows a compositional bias: basic and acidic residues.

Its subcellular location is the membrane. This is Small integral membrane protein 31 from Mus musculus (Mouse).